A 157-amino-acid polypeptide reads, in one-letter code: Transcriptional regulator AzlB (157 aa).

One can recognise an HTH asnC-type domain in the interval 5–66; it reads LDETDKAILR…IVDEKKLGIE (62 aa). The segment at residues 24 to 43 is a DNA-binding region (H-T-H motif); that stretch reads NLNLSKKIGLSPSACLARTK.

Functionally, transcriptional repressor of the azlBCD operon involved in branched-chain amino acid transport. This is Transcriptional regulator AzlB (azlB) from Bacillus subtilis (strain 168).